Consider the following 195-residue polypeptide: Protein GrpE (195 aa).

This sequence belongs to the GrpE family. In terms of assembly, homodimer.

The protein localises to the cytoplasm. Participates actively in the response to hyperosmotic and heat shock by preventing the aggregation of stress-denatured proteins, in association with DnaK and GrpE. It is the nucleotide exchange factor for DnaK and may function as a thermosensor. Unfolded proteins bind initially to DnaJ; upon interaction with the DnaJ-bound protein, DnaK hydrolyzes its bound ATP, resulting in the formation of a stable complex. GrpE releases ADP from DnaK; ATP binding to DnaK triggers the release of the substrate protein, thus completing the reaction cycle. Several rounds of ATP-dependent interactions between DnaJ, DnaK and GrpE are required for fully efficient folding. The protein is Protein GrpE of Francisella tularensis subsp. holarctica (strain FTNF002-00 / FTA).